Reading from the N-terminus, the 347-residue chain is S-adenosylmethionine:tRNA ribosyltransferase-isomerase (347 aa).

This sequence belongs to the QueA family. As to quaternary structure, monomer.

It localises to the cytoplasm. It catalyses the reaction 7-aminomethyl-7-carbaguanosine(34) in tRNA + S-adenosyl-L-methionine = epoxyqueuosine(34) in tRNA + adenine + L-methionine + 2 H(+). It functions in the pathway tRNA modification; tRNA-queuosine biosynthesis. In terms of biological role, transfers and isomerizes the ribose moiety from AdoMet to the 7-aminomethyl group of 7-deazaguanine (preQ1-tRNA) to give epoxyqueuosine (oQ-tRNA). This Methylococcus capsulatus (strain ATCC 33009 / NCIMB 11132 / Bath) protein is S-adenosylmethionine:tRNA ribosyltransferase-isomerase.